The primary structure comprises 345 residues: Arginine N-succinyltransferase (345 aa).

Leu125 is a succinyl-CoA binding site. The active-site Proton donor is the His229.

This sequence belongs to the arginine N-succinyltransferase family.

It carries out the reaction succinyl-CoA + L-arginine = N(2)-succinyl-L-arginine + CoA + H(+). It participates in amino-acid degradation; L-arginine degradation via AST pathway; L-glutamate and succinate from L-arginine: step 1/5. In terms of biological role, catalyzes the transfer of succinyl-CoA to arginine to produce N(2)-succinylarginine. The protein is Arginine N-succinyltransferase of Yersinia enterocolitica serotype O:8 / biotype 1B (strain NCTC 13174 / 8081).